The chain runs to 189 residues: Ribosomal RNA large subunit methyltransferase E (189 aa).

Gly-45, Phe-47, Asp-64, Asp-82, and Asp-104 together coordinate S-adenosyl-L-methionine. The active-site Proton acceptor is the Lys-144.

This sequence belongs to the class I-like SAM-binding methyltransferase superfamily. RNA methyltransferase RlmE family.

It localises to the cytoplasm. The enzyme catalyses uridine(2552) in 23S rRNA + S-adenosyl-L-methionine = 2'-O-methyluridine(2552) in 23S rRNA + S-adenosyl-L-homocysteine + H(+). Specifically methylates the uridine in position 2552 of 23S rRNA at the 2'-O position of the ribose in the fully assembled 50S ribosomal subunit. This Borreliella afzelii (strain PKo) (Borrelia afzelii) protein is Ribosomal RNA large subunit methyltransferase E.